The sequence spans 1071 residues: DNA-directed RNA polymerase subunit beta (1071 aa).

Belongs to the RNA polymerase beta chain family. As to quaternary structure, in plastids the minimal PEP RNA polymerase catalytic core is composed of four subunits: alpha, beta, beta', and beta''. When a (nuclear-encoded) sigma factor is associated with the core the holoenzyme is formed, which can initiate transcription.

Its subcellular location is the plastid. It localises to the chloroplast. The catalysed reaction is RNA(n) + a ribonucleoside 5'-triphosphate = RNA(n+1) + diphosphate. Functionally, DNA-dependent RNA polymerase catalyzes the transcription of DNA into RNA using the four ribonucleoside triphosphates as substrates. The chain is DNA-directed RNA polymerase subunit beta from Drimys granadensis.